Consider the following 224-residue polypeptide: Putative carbamate hydrolase RutD (224 aa).

One can recognise an AB hydrolase-1 domain in the interval 14–115; the sequence is PVVVLISGLG…TVLVSVNGWL (102 aa).

Belongs to the AB hydrolase superfamily. Hydrolase RutD family.

The enzyme catalyses carbamate + 2 H(+) = NH4(+) + CO2. Functionally, involved in pyrimidine catabolism. May facilitate the hydrolysis of carbamate, a reaction that can also occur spontaneously. The sequence is that of Putative carbamate hydrolase RutD from Shigella dysenteriae serotype 1 (strain Sd197).